The sequence spans 110 residues: Large ribosomal subunit protein P1 (110 aa).

Blocked amino end (Ala) is present on Ala-2. Over residues 69–83 the composition is skewed to low complexity; sequence AAPAAGGAAAATEAP. The segment at 69 to 110 is disordered; sequence AAPAAGGAAAATEAPAAKEEKKEEKKEESEEEDEDMGFGLFD. A compositionally biased stretch (basic and acidic residues) spans 84 to 96; it reads AAKEEKKEEKKEE. Ser-97 carries the post-translational modification Phosphoserine; in form eL12'-P.

Part of the ribosomal stalk of the large ribosomal subunit; P1 and P2 exist as dimers which assemble on the P0 scaffold. In terms of processing, phosphorylation of Ser-97 converts eL12' to eL12'-P.

Plays an important role in the elongation step of protein synthesis. The chain is Large ribosomal subunit protein P1 from Artemia salina (Brine shrimp).